A 501-amino-acid polypeptide reads, in one-letter code: Lysine--tRNA ligase (501 aa).

Positions 402 and 409 each coordinate Mg(2+).

Belongs to the class-II aminoacyl-tRNA synthetase family. As to quaternary structure, homodimer. Mg(2+) is required as a cofactor.

The protein localises to the cytoplasm. The enzyme catalyses tRNA(Lys) + L-lysine + ATP = L-lysyl-tRNA(Lys) + AMP + diphosphate. This Helicobacter pylori (strain P12) protein is Lysine--tRNA ligase.